We begin with the raw amino-acid sequence, 294 residues long: Probable 2-(5''-triphosphoribosyl)-3'-dephosphocoenzyme-A synthase (294 aa).

Belongs to the CitG/MdcB family.

It catalyses the reaction 3'-dephospho-CoA + ATP = 2'-(5''-triphospho-alpha-D-ribosyl)-3'-dephospho-CoA + adenine. This Streptococcus equi subsp. zooepidemicus (strain H70) protein is Probable 2-(5''-triphosphoribosyl)-3'-dephosphocoenzyme-A synthase.